A 676-amino-acid polypeptide reads, in one-letter code: Envelope glycoprotein (676 aa).

Positions 1-32 (MGVTGILQLPRDRFKRTSFFLWVIILFQRTFS) are cleaved as a signal peptide. Over 33–650 (IPLGVIHNST…NDNWWTGWRQ (618 aa)) the chain is Extracellular. Asn40 carries an N-linked (GlcNAc...) asparagine; by host glycan. Intrachain disulfides connect Cys53-Cys609, Cys108-Cys135, Cys121-Cys147, Cys511-Cys556, and Cys601-Cys608. A receptor-binding region spans residues 54–201 (RDKLSSTNQL…DFFSSHPLRE (148 aa)). N-linked (GlcNAc...) asparagine; by host glycosylation is found at Asn204, Asn228, Asn238, Asn257, Asn268, Asn296, Asn317, Asn333, Asn346, Asn386, and Asn413. Positions 305–485 (ELSFTAVSNR…SGKLGLITNT (181 aa)) are mucin-like region. The span at 314–335 (RAKNISGQSPARTSSDPGTNTT) shows a compositional bias: polar residues. The tract at residues 314 to 337 (RAKNISGQSPARTSSDPGTNTTTE) is disordered. Disordered stretches follow at residues 373-392 (TSLR…HNTP) and 402-479 (TQVE…SGKL). Positions 414-427 (ASTTSDTPPATTAA) are enriched in low complexity. N-linked (GlcNAc...) asparagine; by host glycosylation is found at Asn436, Asn454, and Asn462. Over residues 447–464 (ATTTSPQNHSETAGNNNT) the composition is skewed to polar residues. The interval 524-539 (GAAIGLAWIPYFGPAA) is fusion peptide. Positions 554 to 595 (LICGLRQLANETTQALQLFLRATTELRTFSILNRKAIDFLLQ) form a coiled coil. A glycan (N-linked (GlcNAc...) asparagine; by host) is linked at Asn563. A coiled-coil region spans residues 615–634 (WTKNITDKIDQIIHDFVDKT). The N-linked (GlcNAc...) asparagine; by host glycan is linked to Asn618. A helical transmembrane segment spans residues 651–671 (WIPAGIGVTGVIIAVIALFCI). S-palmitoyl cysteine; by host attachment occurs at residues Cys670 and Cys672. At 672–676 (CKFVF) the chain is on the cytoplasmic side.

It belongs to the filoviruses glycoprotein family. Homotrimer; each monomer consists of a GP1 and a GP2 subunit linked by disulfide bonds. The resulting peplomers (GP1,2) protrude from the virus surface as spikes. Interacts with host integrin alpha-V/ITGAV. Interacts with host CLEC10A. Binds also to host CD209 and CLEC4M/DC-SIGN(R). Interacts with host FOLR1. Interacts with BST2; this interaction inhibits the antiviral effect of BST2 and this allows viral release from infected cells. Interacts with host FCN1; this interaction enhances viral entry. Interacts with host TLR4; this interaction induces cell death in T-lymphocytes or proinflammatory cytokines and SOCS1 production in monocytes. In terms of assembly, interacts with host entry receptor NPC1. As to quaternary structure, GP1 and GP2delta are part of GP1,2delta soluble complexes released by ectodomain shedding. Post-translationally, the signal peptide region modulates GP's high mannose glycosylation, thereby determining the efficiency of the interactions with DC-SIGN(R). N-glycosylated. In terms of processing, O-glycosylated in the mucin-like region. Post-translationally, palmitoylation of GP2 is not required for its function. Specific enzymatic cleavages in vivo yield mature proteins. The precursor is processed into GP1 and GP2 by host cell furin in the trans Golgi, and maybe by other host proteases, to yield the mature GP1 and GP2 proteins. The cleavage site corresponds to the furin optimal cleavage sequence [KR]-X-[KR]-R. This cleavage does not seem to be required for function. After the internalization of the virus into cell endosomes, GP1 C-terminus is removed by the endosomal proteases cathepsin B, cathepsin L, or both, leaving a 19-kDa N-terminal fragment which is further digested by cathepsin B. Proteolytic processing of GP1,2 by host ADAM17 can remove the transmembrane anchor of GP2 and leads to shedding of complexes consisting in GP1 and truncated GP2 (GP1,2delta).

The protein resides in the virion membrane. It is found in the host cell membrane. The protein localises to the secreted. In terms of biological role, trimeric GP1,2 complexes form the virion surface spikes and mediate the viral entry processes, with GP1 acting as the receptor-binding subunit and GP2 as the membrane fusion subunit. At later times of infection, down-regulates the expression of various host cell surface molecules that are essential for immune surveillance and cell adhesion. Down-modulates several integrins including ITGA1, ITGA2, ITGA3, ITGA4, ITGA5, ITGA6, ITGAV and ITGB1. This decrease in cell adhesion molecules may lead to cell detachment, contributing to the disruption of blood vessel integrity and hemorrhages developed during infection (cytotoxicity). Interacts with host TLR4 and thereby stimulates the differentiation and activation of monocytes leading to bystander death of T-lymphocytes. Down-regulates as well the function of host natural killer cells. Counteracts the antiviral effect of host BST2/tetherin that restricts release of progeny virions from infected cells. However, cooperates with VP40 and host BST2 to activate canonical NF-kappa-B pathway in a manner dependent on neddylation. Functions as a decoy for anti-GP1,2 antibodies thereby contributing to viral immune evasion. Interacts and activates host macrophages and dendritic cells inducing up-regulation of cytokine transcription. This effect is mediated throught activation of host TLR4. Its function is as follows. Responsible for binding to the receptor(s) on target cells. Interacts with CD209/DC-SIGN and CLEC4M/DC-SIGNR which act as cofactors for virus entry into dendritic cells (DCs) and endothelial cells. Binding to the macrophage specific lectin CLEC10A also seems to enhance virus infectivity. Interaction with FOLR1/folate receptor alpha may be a cofactor for virus entry in some cell types, although results are contradictory. Members of the Tyro3 receptor tyrosine kinase family also seem to be cell entry factors in filovirus infection. Once attached, the virions are internalized through clathrin-dependent endocytosis and/or macropinocytosis. After internalization of the virus into the endosomes of the host cell, proteolysis of GP1 by two cysteine proteases, CTSB/cathepsin B and CTSL/cathepsin L removes the glycan cap and allows GP1 binding to the host entry receptor NPC1. NPC1-binding, Ca(2+) and acidic pH induce a conformational change of GP2, which unmasks its fusion peptide and permit membranes fusion. Functionally, acts as a class I viral fusion protein. Under the current model, the protein has at least 3 conformational states: pre-fusion native state, pre-hairpin intermediate state, and post-fusion hairpin state. During viral and target cell membrane fusion, the coiled coil regions (heptad repeats) assume a trimer-of-hairpins structure, positioning the fusion peptide in close proximity to the C-terminal region of the ectodomain. The formation of this structure appears to drive apposition and subsequent fusion of viral and target cell membranes. Responsible for penetration of the virus into the cell cytoplasm by mediating the fusion of the membrane of the endocytosed virus particle with the endosomal membrane. Low pH in endosomes induces an irreversible conformational change in GP2, releasing the fusion hydrophobic peptide. This Epomops franqueti (Franquet's epauletted fruit bat) protein is Envelope glycoprotein (GP).